The following is a 142-amino-acid chain: uncharacterized protein (142 aa).

Residues 1 to 9 (MDMVSPVLN) lie on the Cytoplasmic side of the membrane. Residues 10–30 (LQSSILGELVGIIGKVFFLLI) form a helical membrane-spanning segment. Topologically, residues 31–41 (EEIKYPIITPK) are extracellular. A helical membrane pass occupies residues 42–62 (IIVDAQISSWSLFFFASICNL). Residues 63–101 (SAKFREPIVTTSSIISLMESEKDLKNVNEYFQIMAKMLF) are Cytoplasmic-facing. A helical transmembrane segment spans residues 102–122 (ILENKIVVSLFVVFNISVLII). The Extracellular segment spans residues 123–142 (VKSEPYSYGKVLFKPSSSIF).

The protein localises to the membrane. This is an uncharacterized protein from Saccharomyces cerevisiae (strain ATCC 204508 / S288c) (Baker's yeast).